The sequence spans 618 residues: Proline--tRNA ligase (618 aa).

This sequence belongs to the class-II aminoacyl-tRNA synthetase family. ProS type 1 subfamily. In terms of assembly, homodimer.

It is found in the cytoplasm. The enzyme catalyses tRNA(Pro) + L-proline + ATP = L-prolyl-tRNA(Pro) + AMP + diphosphate. Functionally, catalyzes the attachment of proline to tRNA(Pro) in a two-step reaction: proline is first activated by ATP to form Pro-AMP and then transferred to the acceptor end of tRNA(Pro). As ProRS can inadvertently accommodate and process non-cognate amino acids such as alanine and cysteine, to avoid such errors it has two additional distinct editing activities against alanine. One activity is designated as 'pretransfer' editing and involves the tRNA(Pro)-independent hydrolysis of activated Ala-AMP. The other activity is designated 'posttransfer' editing and involves deacylation of mischarged Ala-tRNA(Pro). The misacylated Cys-tRNA(Pro) is not edited by ProRS. This Streptococcus pyogenes serotype M3 (strain ATCC BAA-595 / MGAS315) protein is Proline--tRNA ligase.